A 120-amino-acid chain; its full sequence is Ribonuclease P protein component (120 aa).

The protein belongs to the RnpA family. As to quaternary structure, consists of a catalytic RNA component (M1 or rnpB) and a protein subunit.

The enzyme catalyses Endonucleolytic cleavage of RNA, removing 5'-extranucleotides from tRNA precursor.. RNaseP catalyzes the removal of the 5'-leader sequence from pre-tRNA to produce the mature 5'-terminus. It can also cleave other RNA substrates such as 4.5S RNA. The protein component plays an auxiliary but essential role in vivo by binding to the 5'-leader sequence and broadening the substrate specificity of the ribozyme. In Chlamydia trachomatis serovar D (strain ATCC VR-885 / DSM 19411 / UW-3/Cx), this protein is Ribonuclease P protein component.